We begin with the raw amino-acid sequence, 196 residues long: GTP cyclohydrolase 1 (196 aa).

3 residues coordinate Zn(2+): Cys-86, His-89, and Cys-158.

Belongs to the GTP cyclohydrolase I family. As to quaternary structure, homomer.

It catalyses the reaction GTP + H2O = 7,8-dihydroneopterin 3'-triphosphate + formate + H(+). It functions in the pathway cofactor biosynthesis; 7,8-dihydroneopterin triphosphate biosynthesis; 7,8-dihydroneopterin triphosphate from GTP: step 1/1. This is GTP cyclohydrolase 1 from Clostridium botulinum (strain Loch Maree / Type A3).